A 369-amino-acid chain; its full sequence is 2-aminoethylphosphonate--pyruvate transaminase (369 aa).

Lys-193 bears the N6-(pyridoxal phosphate)lysine mark.

This sequence belongs to the class-V pyridoxal-phosphate-dependent aminotransferase family. PhnW subfamily. As to quaternary structure, homodimer. Pyridoxal 5'-phosphate serves as cofactor.

It carries out the reaction (2-aminoethyl)phosphonate + pyruvate = phosphonoacetaldehyde + L-alanine. Functionally, involved in phosphonate degradation. The sequence is that of 2-aminoethylphosphonate--pyruvate transaminase from Pseudomonas fluorescens (strain ATCC BAA-477 / NRRL B-23932 / Pf-5).